A 475-amino-acid chain; its full sequence is MNIGRAIKVTQAVVDIKFEGELPKIFNALKSKLKYKDKELVLEVSQHIGDNIVRCIAMDSTDGMSRGDEFVDTGAPISVPIGRSTLGRIFNVVGELIDECGPLKGKYNLEPIHRAPPSFTEQRIQEEVLVTGIKVIDLLAPYLKGGKIGLFGGAGVGKTVLIMELINNIAKAHKGFSVFAGVGERTREGNDLYHEMITSNVININEHEKSQAVLVYGQMNEPPGARARVALTALTMAEYFRDRENQDVLFFVDNIFRFTQAGSEISALLGRIPSAVGYQPTLATDMGAMQERIASTTSGSITSVQAIYVPADDLTDPAPATTFSHLDATTVLSRQIAEMGIYPAVDPLDSTSQSLSAEIIGEEHYKVASEVKRILQTYKSLQDIIAILGMDELSDEDKIIVDRARKIQKFLSQPFHVAEIFTGMPGKFVSLSDTVSSFKGIVEGKYDHLPEAAFYMVGNIDEAIKKAELIQAEAK.

An ATP-binding site is contributed by 152 to 159; the sequence is GGAGVGKT.

It belongs to the ATPase alpha/beta chains family. In terms of assembly, F-type ATPases have 2 components, CF(1) - the catalytic core - and CF(0) - the membrane proton channel. CF(1) has five subunits: alpha(3), beta(3), gamma(1), delta(1), epsilon(1). CF(0) has three main subunits: a(1), b(2) and c(9-12). The alpha and beta chains form an alternating ring which encloses part of the gamma chain. CF(1) is attached to CF(0) by a central stalk formed by the gamma and epsilon chains, while a peripheral stalk is formed by the delta and b chains.

It is found in the cell inner membrane. The enzyme catalyses ATP + H2O + 4 H(+)(in) = ADP + phosphate + 5 H(+)(out). Its function is as follows. Produces ATP from ADP in the presence of a proton gradient across the membrane. The catalytic sites are hosted primarily by the beta subunits. In Wolbachia sp. subsp. Drosophila simulans (strain wRi), this protein is ATP synthase subunit beta.